Reading from the N-terminus, the 181-residue chain is MVRSLGCKAHFGTRQEVRNSTMAIKLSIDLSDATFAELSAVIGYAHQLGVDADEKLTFEGTVLNIEFDGDLQFDDVFDAFDEAEIELDNPREDGPIYADDLIDEDEDYRAQTKSQINDEVINEIRDGISSFVDGIVNGLGQGRRGGRYGDFGGPRGPRGPRNDGPFGPFGPFGPGYRGPRF.

Composition is skewed to gly residues over residues 143-156 and 170-181; these read RRGG…GPRG and GPFGPGYRGPRF. Residues 143–181 are disordered; it reads RRGGRYGDFGGPRGPRGPRNDGPFGPFGPFGPGYRGPRF.

Has been detected in a cytochrome bc1-aa3 supercomplex; its deletion however leaves complex activity unaffected.

This is an uncharacterized protein from Corynebacterium glutamicum (strain ATCC 13032 / DSM 20300 / JCM 1318 / BCRC 11384 / CCUG 27702 / LMG 3730 / NBRC 12168 / NCIMB 10025 / NRRL B-2784 / 534).